Reading from the N-terminus, the 472-residue chain is MDYLPLFADLKRRPVLVVGGGEVAARKIDLLHRAGAQVRVVAQTLSSELEQLHQDGRIHWLALDFLPEQLDEVFLVIAATNDTALNAAVFAAADQRHLLANVVDDQPRCSFIFPSIVDRSPLVVAISSAGQAPVLARILREKLEALLPSSLGDMAAVAGRWRGRVKQHIASMGERRRFWENAFSGRFASLISRGQLAQAEEELQLSLEGQNRNQGEVALVGAGPGDPGLLTLRGLQVIQQADVVLYDHLVSPEVLDLVRRDAQRICVGKRAGAHSVAQEETNQLLVTLAQRGKRVVRLKGGDPFIFGRGGEELQVVARAGIPFHIVPGVTAASGATAYAGIPLTHRDYAQSVTFITGHCRADGDDVDWQALARGRQTLAIYMGTVKAAEISQQLIAHGRASTTPVAVIGRGTRADQQVLTGTLAELELLAHQAPTPALLVIGEVVDLHHQIAWFGQQPQTEQAISPSVVNLA.

The segment at 1–203 (MDYLPLFADL…GQLAQAEEEL (203 aa)) is precorrin-2 dehydrogenase /sirohydrochlorin ferrochelatase. NAD(+) contacts are provided by residues 22–23 (EV) and 43–44 (QT). S128 is subject to Phosphoserine. The uroporphyrinogen-III C-methyltransferase stretch occupies residues 215-472 (GEVALVGAGP…AISPSVVNLA (258 aa)). Position 224 (P224) interacts with S-adenosyl-L-methionine. The Proton acceptor role is filled by D247. Residue K269 is the Proton donor of the active site. Residues 300 to 302 (GGD), I305, 330 to 331 (TA), M382, and G411 each bind S-adenosyl-L-methionine.

The protein in the N-terminal section; belongs to the precorrin-2 dehydrogenase / sirohydrochlorin ferrochelatase family. It in the C-terminal section; belongs to the precorrin methyltransferase family.

The catalysed reaction is uroporphyrinogen III + 2 S-adenosyl-L-methionine = precorrin-2 + 2 S-adenosyl-L-homocysteine + H(+). It catalyses the reaction precorrin-2 + NAD(+) = sirohydrochlorin + NADH + 2 H(+). It carries out the reaction siroheme + 2 H(+) = sirohydrochlorin + Fe(2+). It functions in the pathway cofactor biosynthesis; adenosylcobalamin biosynthesis; precorrin-2 from uroporphyrinogen III: step 1/1. It participates in cofactor biosynthesis; adenosylcobalamin biosynthesis; sirohydrochlorin from precorrin-2: step 1/1. The protein operates within porphyrin-containing compound metabolism; siroheme biosynthesis; precorrin-2 from uroporphyrinogen III: step 1/1. Its pathway is porphyrin-containing compound metabolism; siroheme biosynthesis; siroheme from sirohydrochlorin: step 1/1. It functions in the pathway porphyrin-containing compound metabolism; siroheme biosynthesis; sirohydrochlorin from precorrin-2: step 1/1. In terms of biological role, multifunctional enzyme that catalyzes the SAM-dependent methylations of uroporphyrinogen III at position C-2 and C-7 to form precorrin-2 via precorrin-1. Then it catalyzes the NAD-dependent ring dehydrogenation of precorrin-2 to yield sirohydrochlorin. Finally, it catalyzes the ferrochelation of sirohydrochlorin to yield siroheme. This Yersinia enterocolitica serotype O:8 / biotype 1B (strain NCTC 13174 / 8081) protein is Siroheme synthase 1.